The following is a 518-amino-acid chain: MSTNPHVFSLDVRYHEDASALFAHLGGTTADDAALLESADITTKNGISSLAVLKSSVRITCTGNTVVTQPLTDSGRAVVARLTQQLGQYNTAENTFSFPASDAVDERERLTAPSTIEVLRKLQFESGYSDASLPLLMGGFAFDFLETFETLPAVEESVNTYPDYQFVLAEIVLDINHQDQTAKLAGVSNAPGELEAELNKLSLLIDAALPATEHAYQTTPHDGDTLRVVADIPDAQFRTQINELKENIYNGDIYQVVPARTFTAPCPDAFAAYLQLRATNPSPYMFYIRGLNEGRSYELFGASPESNLKFTAANRELQLYPIAGTRPRGLNPDGSINDELDIRNELDMRTDAKEIAEHTMLVDLARNDLARVSVPASRRVADLLQVDRYSRVMHLVSRVTATLDPELDALDAYRACMNMGTLTGAPKLRAMELLRGVEKRRRGSYGGAVGYLRGNGDMDNCIVIRSAFVQDGVAAVQAGAGVVRDSNPQSEADETLHKAYAVLNAIALAAGSTLEVIR.

Residues S38 and 283–285 contribute to the L-tryptophan site; that span reads PYM. 324–325 is a chorismate binding site; it reads GT. E357 serves as a coordination point for Mg(2+). Residues Y445, R465, 479-481, and G481 contribute to the chorismate site; that span reads GAG. Position 494 (E494) interacts with Mg(2+).

This sequence belongs to the anthranilate synthase component I family. As to quaternary structure, heterotetramer consisting of two non-identical subunits: a beta subunit (TrpG) and a large alpha subunit (TrpE). Mg(2+) is required as a cofactor.

It carries out the reaction chorismate + L-glutamine = anthranilate + pyruvate + L-glutamate + H(+). It participates in amino-acid biosynthesis; L-tryptophan biosynthesis; L-tryptophan from chorismate: step 1/5. With respect to regulation, feedback inhibited by tryptophan. Functionally, part of a heterotetrameric complex that catalyzes the two-step biosynthesis of anthranilate, an intermediate in the biosynthesis of L-tryptophan. In the first step, the glutamine-binding beta subunit (TrpG) of anthranilate synthase (AS) provides the glutamine amidotransferase activity which generates ammonia as a substrate that, along with chorismate, is used in the second step, catalyzed by the large alpha subunit of AS (TrpE) to produce anthranilate. In the absence of TrpG, TrpE can synthesize anthranilate directly from chorismate and high concentrations of ammonia. The polypeptide is Anthranilate synthase component 1 (trpE) (Corynebacterium glutamicum (strain ATCC 13032 / DSM 20300 / JCM 1318 / BCRC 11384 / CCUG 27702 / LMG 3730 / NBRC 12168 / NCIMB 10025 / NRRL B-2784 / 534)).